A 341-amino-acid chain; its full sequence is Protein BEARSKIN2 (341 aa).

The region spanning 9 to 160 (VPPGFRFHPT…GWVVCRVFMK (152 aa)) is the NAC domain. A DNA-binding region spans residues 109–166 (IGMRKTLVFYKGRAPHGQKTDWIMHEYRLEDADDPQANPSEDGWVVCRVFMKKNLFKV).

As to expression, expressed throughout the root cap, in both columella (COL) and lateral root cap (LRC) cells, with higher levels in the COL-adjoining LRC than the upper LRC. Also present at low levels expression in the tips of cotyledons and the cotyledon vasculature, as weel as in vasculature of the first pair of true leaves and at the hydathodes.

The protein resides in the nucleus. Transcription activator. Together with BRN1 and SMB, regulates cellular maturation of root cap. Promotes the expression of genes involved in secondary cell walls (SCW) biosynthesis. The protein is Protein BEARSKIN2 (BRN2) of Arabidopsis thaliana (Mouse-ear cress).